Reading from the N-terminus, the 163-residue chain is Nucleotide-binding protein BcerKBAB4_1061 (163 aa).

The protein belongs to the YajQ family.

Its function is as follows. Nucleotide-binding protein. The polypeptide is Nucleotide-binding protein BcerKBAB4_1061 (Bacillus mycoides (strain KBAB4) (Bacillus weihenstephanensis)).